The primary structure comprises 339 residues: Glycerol-3-phosphate dehydrogenase [NAD(P)+] (339 aa).

NADPH contacts are provided by S15, Y16, H36, and K110. Residues K110, G139, and T141 each contribute to the sn-glycerol 3-phosphate site. Position 143 (A143) interacts with NADPH. 5 residues coordinate sn-glycerol 3-phosphate: K195, D248, S258, R259, and N260. K195 functions as the Proton acceptor in the catalytic mechanism. Residue R259 participates in NADPH binding. Positions 283 and 285 each coordinate NADPH.

The protein belongs to the NAD-dependent glycerol-3-phosphate dehydrogenase family.

The protein localises to the cytoplasm. It catalyses the reaction sn-glycerol 3-phosphate + NAD(+) = dihydroxyacetone phosphate + NADH + H(+). The enzyme catalyses sn-glycerol 3-phosphate + NADP(+) = dihydroxyacetone phosphate + NADPH + H(+). The protein operates within membrane lipid metabolism; glycerophospholipid metabolism. Functionally, catalyzes the reduction of the glycolytic intermediate dihydroxyacetone phosphate (DHAP) to sn-glycerol 3-phosphate (G3P), the key precursor for phospholipid synthesis. The sequence is that of Glycerol-3-phosphate dehydrogenase [NAD(P)+] from Yersinia pseudotuberculosis serotype O:1b (strain IP 31758).